We begin with the raw amino-acid sequence, 100 residues long: MIPLTHGLILAAILFVLGLTGLVIRRNLLFMLIGLEIMINASALAFVVAGSYWGQTDGQVMYILAISLAAAEASIGLALLLQLHRRRQNLNIDSVSEMRG.

A run of 3 helical transmembrane segments spans residues 4–24, 28–48, and 60–80; these read LTHGLILAAILFVLGLTGLVI, LLFMLIGLEIMINASALAFVV, and VMYILAISLAAAEASIGLALL.

Belongs to the complex I subunit 4L family. As to quaternary structure, NDH-1 is composed of 13 different subunits. Subunits NuoA, H, J, K, L, M, N constitute the membrane sector of the complex.

It localises to the cell inner membrane. The enzyme catalyses a quinone + NADH + 5 H(+)(in) = a quinol + NAD(+) + 4 H(+)(out). Functionally, NDH-1 shuttles electrons from NADH, via FMN and iron-sulfur (Fe-S) centers, to quinones in the respiratory chain. The immediate electron acceptor for the enzyme in this species is believed to be ubiquinone. Couples the redox reaction to proton translocation (for every two electrons transferred, four hydrogen ions are translocated across the cytoplasmic membrane), and thus conserves the redox energy in a proton gradient. In Salmonella agona (strain SL483), this protein is NADH-quinone oxidoreductase subunit K.